A 248-amino-acid polypeptide reads, in one-letter code: Type III pantothenate kinase (248 aa).

ATP is bound at residue 8–15 (DAGNTRTK). Residues Tyr-87 and 94–97 (GVDR) each bind substrate. Asp-96 functions as the Proton acceptor in the catalytic mechanism. Residue Thr-119 coordinates ATP. Thr-173 serves as a coordination point for substrate.

The protein belongs to the type III pantothenate kinase family. In terms of assembly, homodimer. It depends on NH4(+) as a cofactor. Requires K(+) as cofactor.

The protein resides in the cytoplasm. It catalyses the reaction (R)-pantothenate + ATP = (R)-4'-phosphopantothenate + ADP + H(+). It functions in the pathway cofactor biosynthesis; coenzyme A biosynthesis; CoA from (R)-pantothenate: step 1/5. In terms of biological role, catalyzes the phosphorylation of pantothenate (Pan), the first step in CoA biosynthesis. In Methylobacillus flagellatus (strain ATCC 51484 / DSM 6875 / VKM B-1610 / KT), this protein is Type III pantothenate kinase.